The primary structure comprises 350 residues: Histidinol-phosphate aminotransferase 1 (350 aa).

Position 211 is an N6-(pyridoxal phosphate)lysine (Lys211).

It belongs to the class-II pyridoxal-phosphate-dependent aminotransferase family. Histidinol-phosphate aminotransferase subfamily. Homodimer. It depends on pyridoxal 5'-phosphate as a cofactor.

The catalysed reaction is L-histidinol phosphate + 2-oxoglutarate = 3-(imidazol-4-yl)-2-oxopropyl phosphate + L-glutamate. It participates in amino-acid biosynthesis; L-histidine biosynthesis; L-histidine from 5-phospho-alpha-D-ribose 1-diphosphate: step 7/9. In Trichormus variabilis (strain ATCC 29413 / PCC 7937) (Anabaena variabilis), this protein is Histidinol-phosphate aminotransferase 1.